A 381-amino-acid polypeptide reads, in one-letter code: Curved DNA-binding protein (381 aa).

Serine 8 bears the Phosphoserine mark. Threonine 362 is subject to Phosphothreonine. Positions 368-375 (KNKKKSKK) match the Nuclear localization signal motif.

It belongs to the peptidase M24 family.

The protein localises to the nucleus. Its function is as follows. A non-essential protein that preferentially binds curved DNA. Binds non-curved DNA with a much lower affinity. The polypeptide is Curved DNA-binding protein (cdb4) (Schizosaccharomyces pombe (strain 972 / ATCC 24843) (Fission yeast)).